The following is a 131-amino-acid chain: D-ribose pyranase (131 aa).

Residue H20 is the Proton donor of the active site. Residues D28, H98, and 120 to 122 each bind substrate; that span reads YAN.

The protein belongs to the RbsD / FucU family. RbsD subfamily. In terms of assembly, homodecamer.

It localises to the cytoplasm. It catalyses the reaction beta-D-ribopyranose = beta-D-ribofuranose. The protein operates within carbohydrate metabolism; D-ribose degradation; D-ribose 5-phosphate from beta-D-ribopyranose: step 1/2. In terms of biological role, catalyzes the interconversion of beta-pyran and beta-furan forms of D-ribose. In Symbiobacterium thermophilum (strain DSM 24528 / JCM 14929 / IAM 14863 / T), this protein is D-ribose pyranase.